Reading from the N-terminus, the 616-residue chain is Protein cereblon (616 aa).

Disordered stretches follow at residues 1–39, 63–137, and 182–220; these read MDEE…DDSV, FGPS…AMPR, and SQER…DIDM. Over residues 11 to 32 the composition is skewed to low complexity; that stretch reads AQEQEVAGSAGEAAAGPSGAEV. The segment covering 96 to 107 has biased composition (acidic residues); that stretch reads SEEDIVLDDGTE. Basic and acidic residues predominate over residues 183–192; that stretch reads QERRRSRNSD. Residues 194–203 are compositionally biased toward acidic residues; sequence VSPEAEDDEL. Residues 206 to 215 show a composition bias toward pro residues; sequence HPPPPPPRPP. Residues 257–482 form the Lon N-terminal domain; it reads HMLIFLHQYI…LIGGILKEET (226 aa). In terms of domain architecture, CULT spans 481–590; sequence ETLFYCRYCN…LAGSSVRIGK (110 aa). Cysteine 486, cysteine 489, cysteine 555, and cysteine 558 together coordinate Zn(2+).

This sequence belongs to the CRBN family. In terms of assembly, likely a component of a DCX (DDB1-CUL4-X-box) protein ligase complex. May interact with pic/DDB1. In terms of processing, ubiquitinated.

The protein resides in the nucleus. It participates in protein modification; protein ubiquitination. In terms of biological role, substrate recognition component of a DCX (DDB1-CUL4-X-box) E3 protein ligase complex that mediates the ubiquitination and subsequent proteasomal degradation of target proteins. Has an essential role in mediating growth by negatively regulating insulin signaling. It also has a role in maintaining presynaptic function in the neuromuscular junction synapses of third-instar larvae. In Drosophila persimilis (Fruit fly), this protein is Protein cereblon.